We begin with the raw amino-acid sequence, 266 residues long: Small ribosomal subunit protein eS1 (266 aa).

The tract at residues 233–266 is disordered; it reads GEGGGSSAAKPSGDDTGAKVDRADGYEPPIQETV. Residues 244-257 show a composition bias toward basic and acidic residues; that stretch reads SGDDTGAKVDRADG.

Belongs to the eukaryotic ribosomal protein eS1 family. In terms of assembly, component of the small ribosomal subunit. Mature ribosomes consist of a small (40S) and a large (60S) subunit. The 40S subunit contains about 33 different proteins and 1 molecule of RNA (18S). The 60S subunit contains about 49 different proteins and 3 molecules of RNA (28S, 5.8S and 5S). Part of the small subunit (SSU) processome, composed of more than 70 proteins and the RNA chaperone small nucleolar RNA (snoRNA) U3.

Its subcellular location is the cytoplasm. It is found in the nucleus. The protein localises to the nucleolus. Component of the small ribosomal subunit. The ribosome is a large ribonucleoprotein complex responsible for the synthesis of proteins in the cell. Part of the small subunit (SSU) processome, first precursor of the small eukaryotic ribosomal subunit. During the assembly of the SSU processome in the nucleolus, many ribosome biogenesis factors, an RNA chaperone and ribosomal proteins associate with the nascent pre-rRNA and work in concert to generate RNA folding, modifications, rearrangements and cleavage as well as targeted degradation of pre-ribosomal RNA by the RNA exosome. May play a role during erythropoiesis. In Salmo salar (Atlantic salmon), this protein is Small ribosomal subunit protein eS1 (rps3a).